We begin with the raw amino-acid sequence, 490 residues long: ATP synthase subunit beta, chloroplastic (490 aa).

Position 170 to 177 (170 to 177 (GGAGVGKT)) interacts with ATP.

It belongs to the ATPase alpha/beta chains family. As to quaternary structure, F-type ATPases have 2 components, CF(1) - the catalytic core - and CF(0) - the membrane proton channel. CF(1) has five subunits: alpha(3), beta(3), gamma(1), delta(1), epsilon(1). CF(0) has four main subunits: a(1), b(1), b'(1) and c(9-12).

The protein resides in the plastid. The protein localises to the chloroplast thylakoid membrane. It carries out the reaction ATP + H2O + 4 H(+)(in) = ADP + phosphate + 5 H(+)(out). Produces ATP from ADP in the presence of a proton gradient across the membrane. The catalytic sites are hosted primarily by the beta subunits. The protein is ATP synthase subunit beta, chloroplastic of Pinus koraiensis (Korean pine).